A 90-amino-acid chain; its full sequence is Probable Fe(2+)-trafficking protein (90 aa).

Belongs to the Fe(2+)-trafficking protein family.

Could be a mediator in iron transactions between iron acquisition and iron-requiring processes, such as synthesis and/or repair of Fe-S clusters in biosynthetic enzymes. The protein is Probable Fe(2+)-trafficking protein of Nitrosococcus oceani (strain ATCC 19707 / BCRC 17464 / JCM 30415 / NCIMB 11848 / C-107).